The following is a 1013-amino-acid chain: Sodium/potassium-transporting ATPase subunit alpha-3 (1013 aa).

Residues Met-1 to Asp-24 form a disordered region. Over Met-1 to Pro-77 the chain is Cytoplasmic. Phosphoserine occurs at positions 37 and 56. The interaction with phosphoinositide-3 kinase stretch occupies residues Pro-72 to Pro-74. The helical transmembrane segment at Glu-78 to Ala-98 threads the bilayer. Residues Ile-99–Tyr-121 lie on the Extracellular side of the membrane. Residues Leu-122–Ala-142 form a helical membrane-spanning segment. At Lys-143–Ile-278 the chain is on the cytoplasmic side. Phosphoserine occurs at positions 218 and 265. The helical transmembrane segment at Glu-279–Ile-298 threads the bilayer. Over Leu-299–Ala-310 the chain is Extracellular. The chain crosses the membrane as a helical span at residues Val-311–Ala-328. Residues Thr-329–Leu-762 lie on the Cytoplasmic side of the membrane. The active-site 4-aspartylphosphate intermediate is Asp-366. A Phosphoserine modification is found at Ser-442. The residue at position 548 (Tyr-548) is a Phosphotyrosine. Residues Asp-707 and Asp-711 each coordinate Mg(2+). Residues Lys-763–Leu-782 traverse the membrane as a helical segment. The Extracellular portion of the chain corresponds to Phe-783–Leu-792. The chain crosses the membrane as a helical span at residues Gly-793–Ala-813. The Cytoplasmic segment spans residues Tyr-814–Lys-833. Residues Leu-834–Phe-856 traverse the membrane as a helical segment. Residues Phe-857–Cys-908 are Extracellular-facing. The helical transmembrane segment at His-909 to Lys-928 threads the bilayer. The Cytoplasmic portion of the chain corresponds to Thr-929–Asn-941. Position 933 is a phosphoserine; by PKA (Ser-933). The chain crosses the membrane as a helical span at residues Lys-942 to Tyr-960. The Extracellular segment spans residues Cys-961–Pro-975. A helical transmembrane segment spans residues Ser-976–Lys-996. The Cytoplasmic segment spans residues Leu-997–Tyr-1013.

It belongs to the cation transport ATPase (P-type) (TC 3.A.3) family. Type IIC subfamily. In terms of assembly, the sodium/potassium-transporting ATPase is composed of a catalytic alpha subunit, an auxiliary non-catalytic beta subunit and an additional regulatory subunit. Interacts with regulatory subunit FXYD1.

The protein localises to the cell membrane. It carries out the reaction K(+)(out) + Na(+)(in) + ATP + H2O = K(+)(in) + Na(+)(out) + ADP + phosphate + H(+). Functionally, this is the catalytic component of the active enzyme, which catalyzes the hydrolysis of ATP coupled with the exchange of sodium and potassium ions across the plasma membrane. This action creates the electrochemical gradient of sodium and potassium ions, providing the energy for active transport of various nutrients. The chain is Sodium/potassium-transporting ATPase subunit alpha-3 (ATP1A3) from Homo sapiens (Human).